The following is a 323-amino-acid chain: MQVLKINPRGYCYGVVDAMVIARNAALDKTLPRPIYILGMIVHNKHVTDAFEEDGIITLDGDNRLEIIEQVESGTVIFTAHGVSPEIRDIAKRKGLVSIDATCPDVTVTHDLIREKSAEGYDIIYIGKKGHPEPEGAIGVAPDHVHLVQSSNDIDSLNLTNDKLLVTNQTTMSQWDVAHLMDSLKEKFPHIEVHKEICLATQVRQEAVAQQAGEADLLIVVGDPKSNNSNRLTQVSVEIAGTPSYRIADVSELKIDWLKGINKVAVTAGASTPTPIVKEVISFLDQFDENDPSTHVIKRTVTLDKILPKIKTPKPVDKIMPHK.

Cys12 provides a ligand contact to [4Fe-4S] cluster. 2 residues coordinate (2E)-4-hydroxy-3-methylbut-2-enyl diphosphate: His43 and His81. Dimethylallyl diphosphate-binding residues include His43 and His81. Isopentenyl diphosphate contacts are provided by His43 and His81. Cys103 lines the [4Fe-4S] cluster pocket. Residue His131 participates in (2E)-4-hydroxy-3-methylbut-2-enyl diphosphate binding. His131 provides a ligand contact to dimethylallyl diphosphate. Position 131 (His131) interacts with isopentenyl diphosphate. Catalysis depends on Glu133, which acts as the Proton donor. Residue Thr170 participates in (2E)-4-hydroxy-3-methylbut-2-enyl diphosphate binding. Cys198 is a binding site for [4Fe-4S] cluster. The (2E)-4-hydroxy-3-methylbut-2-enyl diphosphate site is built by Ser226, Asn228, and Ser271. Residues Ser226, Asn228, and Ser271 each contribute to the dimethylallyl diphosphate site. 3 residues coordinate isopentenyl diphosphate: Ser226, Asn228, and Ser271.

This sequence belongs to the IspH family. [4Fe-4S] cluster is required as a cofactor.

The enzyme catalyses isopentenyl diphosphate + 2 oxidized [2Fe-2S]-[ferredoxin] + H2O = (2E)-4-hydroxy-3-methylbut-2-enyl diphosphate + 2 reduced [2Fe-2S]-[ferredoxin] + 2 H(+). It catalyses the reaction dimethylallyl diphosphate + 2 oxidized [2Fe-2S]-[ferredoxin] + H2O = (2E)-4-hydroxy-3-methylbut-2-enyl diphosphate + 2 reduced [2Fe-2S]-[ferredoxin] + 2 H(+). It functions in the pathway isoprenoid biosynthesis; dimethylallyl diphosphate biosynthesis; dimethylallyl diphosphate from (2E)-4-hydroxy-3-methylbutenyl diphosphate: step 1/1. It participates in isoprenoid biosynthesis; isopentenyl diphosphate biosynthesis via DXP pathway; isopentenyl diphosphate from 1-deoxy-D-xylulose 5-phosphate: step 6/6. Functionally, catalyzes the conversion of 1-hydroxy-2-methyl-2-(E)-butenyl 4-diphosphate (HMBPP) into a mixture of isopentenyl diphosphate (IPP) and dimethylallyl diphosphate (DMAPP). Acts in the terminal step of the DOXP/MEP pathway for isoprenoid precursor biosynthesis. This is 4-hydroxy-3-methylbut-2-enyl diphosphate reductase from Lysinibacillus sphaericus (strain C3-41).